The primary structure comprises 348 residues: MSRFWSPFVKDLVPYVPGEQPKLARLVKLNTNENPYGPSPKALEAMRGELNDNLRLYPDPNGDRLKQAVAEYYGVTPAQVFVGNGSDEVLAHIFHGLFQHDAPLLFPDISYSFYPVYCGLYGIAFEQVALDEQFQIRIEDYKKPNAGIIFPNPNAPTGCLMPLQVVEQLLQANRDSVVVVDEAYIDFGGETAISLVDRYDNLLVTQTLSKSRSLAGLRVGLAVGHPDLIEALERIKNSFNSYPLDRAAIVGAAVAFEDREYFEDTCRKVIDSREVLVGQLQAKGFEVLPSAANFIFARHPQQDAGELAARLREQGVIVRHFKQPRIAQFLRITIGTPEMNQALLDALS.

Residue lysine 210 is modified to N6-(pyridoxal phosphate)lysine.

Belongs to the class-II pyridoxal-phosphate-dependent aminotransferase family. Histidinol-phosphate aminotransferase subfamily. Homodimer. Pyridoxal 5'-phosphate is required as a cofactor.

The catalysed reaction is L-histidinol phosphate + 2-oxoglutarate = 3-(imidazol-4-yl)-2-oxopropyl phosphate + L-glutamate. It participates in amino-acid biosynthesis; L-histidine biosynthesis; L-histidine from 5-phospho-alpha-D-ribose 1-diphosphate: step 7/9. The chain is Histidinol-phosphate aminotransferase from Pseudomonas putida (strain ATCC 700007 / DSM 6899 / JCM 31910 / BCRC 17059 / LMG 24140 / F1).